The following is a 365-amino-acid chain: Caffeic acid 3-O-methyltransferase 1 (365 aa).

Substrate is bound at residue 130–136 (MNQDKVL). The segment at 162 to 180 (AFEYHGTDPRFNKVFNKGM) is substrate binding. Positions 208, 231, 251, 252, and 265 each coordinate S-adenosyl-L-methionine. His269 functions as the Proton acceptor in the catalytic mechanism.

Belongs to the class I-like SAM-binding methyltransferase superfamily. Cation-independent O-methyltransferase family. COMT subfamily. Homodimer. In terms of processing, the N-terminus is blocked. Xylem.

It catalyses the reaction (E)-caffeate + S-adenosyl-L-methionine = (E)-ferulate + S-adenosyl-L-homocysteine + H(+). The protein operates within aromatic compound metabolism; phenylpropanoid biosynthesis. In terms of biological role, catalyzes the conversion of caffeic acid to ferulic acid and of 5-hydroxyferulic acid to sinapic acid. The resulting products may subsequently be converted to the corresponding alcohols that are incorporated into lignins. The protein is Caffeic acid 3-O-methyltransferase 1 (OMT1) of Populus tremuloides (Quaking aspen).